The chain runs to 116 residues: MKVLSLLYLLTAIPGILSDVQLQESGPGLVKPSQSLSLTCSVTGYSITSGYYWNWIRQFPGNKLEWMGYISYDGSNNYNPSLKNRISITRDTSKNQFFLKLNSVTTEDTATYYCAR.

The signal sequence occupies residues 1 to 18; sequence MKVLSLLYLLTAIPGILS. The segment at 19–48 is framework-1; the sequence is DVQLQESGPGLVKPSQSLSLTCSVTGYSIT. The cysteines at positions 40 and 114 are disulfide-linked. The tract at residues 49-53 is complementarity-determining-1; it reads SGYYW. The framework-2 stretch occupies residues 54–67; sequence NWIRQFPGNKLEWM. The tract at residues 68–84 is complementarity-determining-2; the sequence is GYISYDGSNNYNPSLKN. Residues 85–116 form a framework-3 region; that stretch reads RISITRDTSKNQFFLKLNSVTTEDTATYYCAR.

The chain is Ig heavy chain V region 3-6 (Ighv3-6) from Mus musculus (Mouse).